Here is a 39-residue protein sequence, read N- to C-terminus: B melanoma antigen 4 (39 aa).

An N-terminal signal peptide occupies residues 1-17 (MAAGAVFLALSAQLLQA).

The protein belongs to the BAGE family. Not expressed in normal tissues except in testis. Expressed in melanoma, bladder and lung carcinomas.

The protein resides in the secreted. Unknown. Candidate gene encoding tumor antigens. The chain is B melanoma antigen 4 (BAGE4) from Homo sapiens (Human).